The following is a 144-amino-acid chain: Transcriptional regulator MraZ (144 aa).

2 consecutive SpoVT-AbrB domains span residues 5–47 (EYQY…PLDR) and 76–121 (AHKT…SQER).

The protein belongs to the MraZ family. As to quaternary structure, forms oligomers.

The protein localises to the cytoplasm. It is found in the nucleoid. The sequence is that of Transcriptional regulator MraZ from Thermus thermophilus (strain ATCC BAA-163 / DSM 7039 / HB27).